A 279-amino-acid polypeptide reads, in one-letter code: Pleckstrin homology domain-containing family F member 1 (279 aa).

One can recognise a PH domain in the interval 35–131 (VLLGEGVLTK…WISHIEECVR (97 aa)). The FYVE-type zinc finger occupies 152–212 (DKATDICMRC…VCSLCYRELA (61 aa)). Residues cysteine 158, cysteine 161, cysteine 175, cysteine 178, cysteine 183, cysteine 186, cysteine 204, and cysteine 207 each contribute to the Zn(2+) site. Residues 219 to 264 (EAKERFRGSPGQLTHLGSTMCGASSGDDDDSDEDREGSGDGDWPTQ) form a disordered region. Over residues 244–253 (GDDDDSDEDR) the composition is skewed to acidic residues.

Its subcellular location is the nucleus. It is found in the cytoplasm. The protein resides in the perinuclear region. The protein localises to the lysosome. Its function is as follows. May induce apoptosis through the lysosomal-mitochondrial pathway. Translocates to the lysosome initiating the permeabilization of lysosomal membrane (LMP) and resulting in the release of CTSD and CTSL to the cytoplasm. Triggers the caspase-independent apoptosis by altering mitochondrial membrane permeabilization (MMP) resulting in the release of PDCD8. The chain is Pleckstrin homology domain-containing family F member 1 (Plekhf1) from Rattus norvegicus (Rat).